Here is a 102-residue protein sequence, read N- to C-terminus: Defensin-like protein 285 (102 aa).

An N-terminal signal peptide occupies residues 1-28; the sequence is MTNLYFKTAFLLSLLLLSFSYQSKLIEA. 4 disulfides stabilise this stretch: Cys-39–Cys-100, Cys-64–Cys-83, Cys-70–Cys-88, and Cys-75–Cys-90.

Belongs to the DEFL family.

It is found in the secreted. The chain is Defensin-like protein 285 from Arabidopsis thaliana (Mouse-ear cress).